Reading from the N-terminus, the 219-residue chain is MRNTDTPIAVEGYPFIAGFAAATLLLALLGQFLHCGFFVPATLFFVLTVFTVFFFRNPERATPGDENTVVAPADGEVIFLGKVIEPHTNGEFEKISIFMSVFNVHVNRAPISGKVVDGFYTKGKFFDVRDERASFENEQQGLVLETAAGLRMVVVQVAGLIARRIVCYAKTGDSLSRGRRYGLIRFGSRLDIYLPLGTSIDVVMGQKTVAGETVLGILP.

Residue serine 188 is the Schiff-base intermediate with substrate; via pyruvic acid of the active site. Pyruvic acid (Ser); by autocatalysis is present on serine 188.

This sequence belongs to the phosphatidylserine decarboxylase family. PSD-A subfamily. Heterodimer of a large membrane-associated beta subunit and a small pyruvoyl-containing alpha subunit. The cofactor is pyruvate. In terms of processing, is synthesized initially as an inactive proenzyme. Formation of the active enzyme involves a self-maturation process in which the active site pyruvoyl group is generated from an internal serine residue via an autocatalytic post-translational modification. Two non-identical subunits are generated from the proenzyme in this reaction, and the pyruvate is formed at the N-terminus of the alpha chain, which is derived from the carboxyl end of the proenzyme. The post-translation cleavage follows an unusual pathway, termed non-hydrolytic serinolysis, in which the side chain hydroxyl group of the serine supplies its oxygen atom to form the C-terminus of the beta chain, while the remainder of the serine residue undergoes an oxidative deamination to produce ammonia and the pyruvoyl prosthetic group on the alpha chain.

It is found in the cell membrane. The enzyme catalyses a 1,2-diacyl-sn-glycero-3-phospho-L-serine + H(+) = a 1,2-diacyl-sn-glycero-3-phosphoethanolamine + CO2. It functions in the pathway phospholipid metabolism; phosphatidylethanolamine biosynthesis; phosphatidylethanolamine from CDP-diacylglycerol: step 2/2. In terms of biological role, catalyzes the formation of phosphatidylethanolamine (PtdEtn) from phosphatidylserine (PtdSer). The sequence is that of Phosphatidylserine decarboxylase proenzyme from Citrifermentans bemidjiense (strain ATCC BAA-1014 / DSM 16622 / JCM 12645 / Bem) (Geobacter bemidjiensis).